The sequence spans 368 residues: Protein NDRG2 (368 aa).

Residues 330–339 (SLSSSYSMEG) are compositionally biased toward low complexity. The segment at 330-368 (SLSSSYSMEGSRSRSRTLSQGSQGGQLPPSPSNTMEVSC) is disordered.

The protein belongs to the NDRG family.

It is found in the cytoplasm. Functionally, contributes to the regulation of the Wnt signaling pathway. Down-regulates CTNNB1-mediated transcriptional activation of target genes. May be involved in neuron differentiation. This chain is Protein NDRG2 (ndrg2), found in Danio rerio (Zebrafish).